A 242-amino-acid chain; its full sequence is uncharacterized protein (242 aa).

The span at Met1–Asn12 shows a compositional bias: basic and acidic residues. A disordered region spans residues Met1 to Ser21. Topologically, residues Met1–Ser23 are cytoplasmic. The chain crosses the membrane as a helical span at residues Trp24–Ser44. Residues Met45–Ser242 lie on the Extracellular side of the membrane. A disordered region spans residues Gly64–Gln91. Residues Ser73–Asp89 are compositionally biased toward basic and acidic residues. The region spanning Glu117–Lys238 is the OmpA-like domain.

This sequence belongs to the MotB family.

It localises to the cell membrane. Functionally, may be involved in some transport function. This is an uncharacterized protein from Bacillus subtilis (strain 168).